A 164-amino-acid chain; its full sequence is Ribosome-binding factor A (164 aa).

The disordered stretch occupies residues 123–164 (ARDLGVPPSGEDDGDDEADDEDDDGGEEGPGAAAPPPADEGR). Positions 132-149 (GEDDGDDEADDEDDDGGE) are enriched in acidic residues. Residues 155–164 (AAPPPADEGR) are compositionally biased toward pro residues.

Belongs to the RbfA family. As to quaternary structure, monomer. Binds 30S ribosomal subunits, but not 50S ribosomal subunits or 70S ribosomes.

The protein localises to the cytoplasm. Functionally, one of several proteins that assist in the late maturation steps of the functional core of the 30S ribosomal subunit. Associates with free 30S ribosomal subunits (but not with 30S subunits that are part of 70S ribosomes or polysomes). Required for efficient processing of 16S rRNA. May interact with the 5'-terminal helix region of 16S rRNA. This Rhodospirillum rubrum (strain ATCC 11170 / ATH 1.1.1 / DSM 467 / LMG 4362 / NCIMB 8255 / S1) protein is Ribosome-binding factor A.